The chain runs to 622 residues: Low affinity potassium transport system protein Kup (622 aa).

The next 12 membrane-spanning stretches (helical) occupy residues 9-29, 46-66, 101-121, 137-157, 165-185, 213-233, 247-267, 276-296, 337-357, 363-383, 395-415, and 416-436; these read LSAV…TSPL, PDVV…VVSV, ILVV…VITP, PALD…LFVI, VGKL…LLGL, VSFF…ALYA, WFTV…ALLL, PFFL…ATLA, IYIP…IIGF, LAAA…ILFC, FLVV…FSAN, and VLKL…MFII.

Belongs to the HAK/KUP transporter (TC 2.A.72) family.

It is found in the cell inner membrane. The catalysed reaction is K(+)(in) + H(+)(in) = K(+)(out) + H(+)(out). Its function is as follows. Responsible for the low-affinity transport of potassium into the cell. Likely operates as a K(+):H(+) symporter. The protein is Low affinity potassium transport system protein Kup of Yersinia pestis bv. Antiqua (strain Antiqua).